A 485-amino-acid polypeptide reads, in one-letter code: Apolipoprotein N-acyltransferase (485 aa).

Helical transmembrane passes span 8–28 (IAGAILPLAFAPFNWFPIAFV), 49–69 (GWLFGFGFFGAGASWVYVSIH), 76–96 (VPLAVLITVLFVFVLALFIAF), 121–141 (WWVVWEWLRSILFTGFPWLFL), 157–177 (FGIYGISLIVAFISGCIYLLV), and 186–206 (IMCLILIILPFIVGWVLTFIP). Residues 220 to 457 (VQGNIGQRLK…RLLLTGQIKP (238 aa)) form the CN hydrolase domain. Residue glutamate 259 is the Proton acceptor of the active site. Residue lysine 317 is part of the active site. The active-site Nucleophile is the cysteine 369. Residues 464–484 (LMRWNYYPVVGIIIIFLLLTF) traverse the membrane as a helical segment.

The protein belongs to the CN hydrolase family. Apolipoprotein N-acyltransferase subfamily.

The protein resides in the cell inner membrane. It carries out the reaction N-terminal S-1,2-diacyl-sn-glyceryl-L-cysteinyl-[lipoprotein] + a glycerophospholipid = N-acyl-S-1,2-diacyl-sn-glyceryl-L-cysteinyl-[lipoprotein] + a 2-acyl-sn-glycero-3-phospholipid + H(+). It functions in the pathway protein modification; lipoprotein biosynthesis (N-acyl transfer). Its function is as follows. Catalyzes the phospholipid dependent N-acylation of the N-terminal cysteine of apolipoprotein, the last step in lipoprotein maturation. The sequence is that of Apolipoprotein N-acyltransferase from Coxiella burnetii (strain RSA 493 / Nine Mile phase I).